The following is a 197-amino-acid chain: Holliday junction branch migration complex subunit RuvA (197 aa).

The domain I stretch occupies residues 1 to 64 (MIGRISGLLL…EDAHLLFGFA (64 aa)). The tract at residues 65–142 (TEGERQAFRQ…DLGVSAIPGA (78 aa)) is domain II. Positions 143-153 (AGARRPSTMGS) are flexible linker. The domain III stretch occupies residues 153-197 (SDVLNALLSLGYNDREANWAVSQLSVDLSVSDGIRQALKFLSKEK).

This sequence belongs to the RuvA family. Homotetramer. Forms an RuvA(8)-RuvB(12)-Holliday junction (HJ) complex. HJ DNA is sandwiched between 2 RuvA tetramers; dsDNA enters through RuvA and exits via RuvB. An RuvB hexamer assembles on each DNA strand where it exits the tetramer. Each RuvB hexamer is contacted by two RuvA subunits (via domain III) on 2 adjacent RuvB subunits; this complex drives branch migration. In the full resolvosome a probable DNA-RuvA(4)-RuvB(12)-RuvC(2) complex forms which resolves the HJ.

The protein resides in the cytoplasm. In terms of biological role, the RuvA-RuvB-RuvC complex processes Holliday junction (HJ) DNA during genetic recombination and DNA repair, while the RuvA-RuvB complex plays an important role in the rescue of blocked DNA replication forks via replication fork reversal (RFR). RuvA specifically binds to HJ cruciform DNA, conferring on it an open structure. The RuvB hexamer acts as an ATP-dependent pump, pulling dsDNA into and through the RuvAB complex. HJ branch migration allows RuvC to scan DNA until it finds its consensus sequence, where it cleaves and resolves the cruciform DNA. The polypeptide is Holliday junction branch migration complex subunit RuvA (Nitrosospira multiformis (strain ATCC 25196 / NCIMB 11849 / C 71)).